Here is a 134-residue protein sequence, read N- to C-terminus: Large ribosomal subunit protein bL12 (134 aa).

The protein belongs to the bacterial ribosomal protein bL12 family. As to quaternary structure, homodimer. Part of the ribosomal stalk of the 50S ribosomal subunit. Forms a multimeric L10(L12)X complex, where L10 forms an elongated spine to which 2 to 4 L12 dimers bind in a sequential fashion. Binds GTP-bound translation factors.

In terms of biological role, forms part of the ribosomal stalk which helps the ribosome interact with GTP-bound translation factors. Is thus essential for accurate translation. The chain is Large ribosomal subunit protein bL12 from Chlamydia abortus (strain DSM 27085 / S26/3) (Chlamydophila abortus).